A 122-amino-acid chain; its full sequence is Large ribosomal subunit protein eL34 (122 aa).

The protein belongs to the eukaryotic ribosomal protein eL34 family. As to quaternary structure, component of the large ribosomal subunit. Mature ribosomes consist of a small (40S) and a large (60S) subunit. The 40S subunit contains about 32 different proteins and 1 molecule of RNA (18S). The 60S subunit contains 45 different proteins and 3 molecules of RNA (25S, 5.8S and 5S).

Its subcellular location is the cytoplasm. Functionally, component of the ribosome, a large ribonucleoprotein complex responsible for the synthesis of proteins in the cell. The small ribosomal subunit (SSU) binds messenger RNAs (mRNAs) and translates the encoded message by selecting cognate aminoacyl-transfer RNA (tRNA) molecules. The large subunit (LSU) contains the ribosomal catalytic site termed the peptidyl transferase center (PTC), which catalyzes the formation of peptide bonds, thereby polymerizing the amino acids delivered by tRNAs into a polypeptide chain. The nascent polypeptides leave the ribosome through a tunnel in the LSU and interact with protein factors that function in enzymatic processing, targeting, and the membrane insertion of nascent chains at the exit of the ribosomal tunnel. The chain is Large ribosomal subunit protein eL34 from Candida albicans (strain SC5314 / ATCC MYA-2876) (Yeast).